The sequence spans 375 residues: Probable protein-glutamate methylesterase BB_0415 (375 aa).

A Response regulatory domain is found at Ser-6–Ile-120. One can recognise a CheB-type methylesterase domain in the interval Lys-183 to Ser-375. Catalysis depends on residues Ser-195, His-221, and Asp-317.

The catalysed reaction is [protein]-L-glutamate 5-O-methyl ester + H2O = L-glutamyl-[protein] + methanol + H(+). In Borreliella burgdorferi (strain ATCC 35210 / DSM 4680 / CIP 102532 / B31) (Borrelia burgdorferi), this protein is Probable protein-glutamate methylesterase BB_0415.